The chain runs to 440 residues: 23S rRNA (uracil(1939)-C(5))-methyltransferase RlmD (440 aa).

In terms of domain architecture, TRAM spans 11–69 (STLDTKHQPVTIERLDHQGSGLAFLHKKPLFVDGALPGEEVLIQLTENKSKYARGQLIK). The [4Fe-4S] cluster site is built by Cys-82, Cys-88, Cys-91, and Cys-169. The S-adenosyl-L-methionine site is built by Gln-272, Phe-301, Asn-306, Glu-322, Asn-349, and Asp-370. Catalysis depends on Cys-396, which acts as the Nucleophile.

This sequence belongs to the class I-like SAM-binding methyltransferase superfamily. RNA M5U methyltransferase family. RlmD subfamily.

It carries out the reaction uridine(1939) in 23S rRNA + S-adenosyl-L-methionine = 5-methyluridine(1939) in 23S rRNA + S-adenosyl-L-homocysteine + H(+). Catalyzes the formation of 5-methyl-uridine at position 1939 (m5U1939) in 23S rRNA. The chain is 23S rRNA (uracil(1939)-C(5))-methyltransferase RlmD from Vibrio cholerae serotype O1 (strain M66-2).